Here is a 354-residue protein sequence, read N- to C-terminus: Ferrochelatase (354 aa).

Residues His-204 and Glu-306 each contribute to the Fe cation site.

The protein belongs to the ferrochelatase family.

It is found in the cytoplasm. The enzyme catalyses heme b + 2 H(+) = protoporphyrin IX + Fe(2+). It participates in porphyrin-containing compound metabolism; protoheme biosynthesis; protoheme from protoporphyrin-IX: step 1/1. Functionally, catalyzes the ferrous insertion into protoporphyrin IX. The polypeptide is Ferrochelatase (Coxiella burnetii (strain Dugway 5J108-111)).